Consider the following 534-residue polypeptide: Pentatricopeptide repeat-containing protein At5g59600 (534 aa).

12 PPR repeats span residues 50–80, 81–115, 116–150, 151–181, 182–216, 217–251, 252–286, 287–321, 322–352, 353–387, 388–418, and 424–454; these read LTRIAAKLVTFYVECGKVLDARKVFDEMPKR, DISGCVVMIGACARNGYYQESLDFFREMYKDGLKL, DAFIVPSLLKASRNLLDREFGKMIHCLVLKFSYES, DAFIVSSLIDMYSKFGEVGNARKVFSDLGEQ, DLVVFNAMISGYANNSQADEALNLVKDMKLLGIKP, DVITWNALISGFSHMRNEEKVSEILELMCLDGYKP, DVVSWTSIISGLVHNFQNEKAFDAFKQMLTHGLYP, NSATIITLLPACTTLAYMKHGKEIHGYSVVTGLED, HGFVRSALLDMYGKCGFISEAMILFRKTPKK, TTVTFNSMIFCYANHGLADKAVELFDQMEATGEKL, DHLTFTAILTACSHAGLTDLGQNLFLLMQNK, and RLEHYACMVDLLGRAGKLVEAYEMIKAMRME. Residues 459–534 form a type E motif region; the sequence is VWGALLAACR…FLGSSWVETV (76 aa).

The protein belongs to the PPR family. PCMP-E subfamily.

The polypeptide is Pentatricopeptide repeat-containing protein At5g59600 (PCMP-E1) (Arabidopsis thaliana (Mouse-ear cress)).